A 245-amino-acid polypeptide reads, in one-letter code: Carboxy-S-adenosyl-L-methionine synthase (245 aa).

S-adenosyl-L-methionine is bound by residues tyrosine 42, 67-69, 92-93, 120-121, asparagine 135, and arginine 202; these read GCS, DN, and DI.

Belongs to the class I-like SAM-binding methyltransferase superfamily. Cx-SAM synthase family. Homodimer.

It carries out the reaction prephenate + S-adenosyl-L-methionine = carboxy-S-adenosyl-L-methionine + 3-phenylpyruvate + H2O. Its function is as follows. Catalyzes the conversion of S-adenosyl-L-methionine (SAM) to carboxy-S-adenosyl-L-methionine (Cx-SAM). The chain is Carboxy-S-adenosyl-L-methionine synthase from Vibrio vulnificus (strain CMCP6).